The primary structure comprises 467 residues: ATP synthase subunit beta (467 aa).

Residue 156–163 (GGAGVGKT) coordinates ATP.

The protein belongs to the ATPase alpha/beta chains family. In terms of assembly, F-type ATPases have 2 components, CF(1) - the catalytic core - and CF(0) - the membrane proton channel. CF(1) has five subunits: alpha(3), beta(3), gamma(1), delta(1), epsilon(1). CF(0) has three main subunits: a(1), b(2) and c(9-12). The alpha and beta chains form an alternating ring which encloses part of the gamma chain. CF(1) is attached to CF(0) by a central stalk formed by the gamma and epsilon chains, while a peripheral stalk is formed by the delta and b chains.

The protein localises to the cell inner membrane. The enzyme catalyses ATP + H2O + 4 H(+)(in) = ADP + phosphate + 5 H(+)(out). In terms of biological role, produces ATP from ADP in the presence of a proton gradient across the membrane. The catalytic sites are hosted primarily by the beta subunits. The protein is ATP synthase subunit beta of Cupriavidus necator (strain ATCC 17699 / DSM 428 / KCTC 22496 / NCIMB 10442 / H16 / Stanier 337) (Ralstonia eutropha).